Reading from the N-terminus, the 345-residue chain is Beta-ketoacyl-[acyl-carrier-protein] synthase III (345 aa).

Active-site residues include Cys-114 and His-272. Positions 273–277 (QANQR) are ACP-binding. Asn-302 is a catalytic residue.

It belongs to the thiolase-like superfamily. FabH family. In terms of assembly, homodimer.

It is found in the cytoplasm. It catalyses the reaction malonyl-[ACP] + acetyl-CoA + H(+) = 3-oxobutanoyl-[ACP] + CO2 + CoA. Its pathway is lipid metabolism; fatty acid biosynthesis. Its function is as follows. Catalyzes the condensation reaction of fatty acid synthesis by the addition to an acyl acceptor of two carbons from malonyl-ACP. Catalyzes the first condensation reaction which initiates fatty acid synthesis and may therefore play a role in governing the total rate of fatty acid production. Possesses both acetoacetyl-ACP synthase and acetyl transacylase activities. Its substrate specificity determines the biosynthesis of branched-chain and/or straight-chain of fatty acids. This is Beta-ketoacyl-[acyl-carrier-protein] synthase III from Rhodopirellula baltica (strain DSM 10527 / NCIMB 13988 / SH1).